Here is a 583-residue protein sequence, read N- to C-terminus: Aspartate--tRNA ligase (583 aa).

An L-aspartate-binding site is contributed by glutamate 169. Residues glutamine 193 to lysine 196 form an aspartate region. Arginine 215 serves as a coordination point for L-aspartate. ATP is bound by residues arginine 215–glutamate 217 and glutamine 224. Histidine 443 contributes to the L-aspartate binding site. Glutamate 477 contributes to the ATP binding site. Residue arginine 484 participates in L-aspartate binding. Glycine 529–arginine 532 provides a ligand contact to ATP.

Belongs to the class-II aminoacyl-tRNA synthetase family. Type 1 subfamily. As to quaternary structure, homodimer.

The protein localises to the cytoplasm. It carries out the reaction tRNA(Asp) + L-aspartate + ATP = L-aspartyl-tRNA(Asp) + AMP + diphosphate. Functionally, catalyzes the attachment of L-aspartate to tRNA(Asp) in a two-step reaction: L-aspartate is first activated by ATP to form Asp-AMP and then transferred to the acceptor end of tRNA(Asp). This is Aspartate--tRNA ligase from Stenotrophomonas maltophilia (strain R551-3).